The primary structure comprises 260 residues: Ubiquinone/menaquinone biosynthesis C-methyltransferase UbiE (260 aa).

S-adenosyl-L-methionine contacts are provided by residues T83, D104, and 132–133 (NA).

This sequence belongs to the class I-like SAM-binding methyltransferase superfamily. MenG/UbiE family.

The enzyme catalyses a 2-demethylmenaquinol + S-adenosyl-L-methionine = a menaquinol + S-adenosyl-L-homocysteine + H(+). It catalyses the reaction a 2-methoxy-6-(all-trans-polyprenyl)benzene-1,4-diol + S-adenosyl-L-methionine = a 5-methoxy-2-methyl-3-(all-trans-polyprenyl)benzene-1,4-diol + S-adenosyl-L-homocysteine + H(+). The protein operates within quinol/quinone metabolism; menaquinone biosynthesis; menaquinol from 1,4-dihydroxy-2-naphthoate: step 2/2. It functions in the pathway cofactor biosynthesis; ubiquinone biosynthesis. In terms of biological role, methyltransferase required for the conversion of demethylmenaquinol (DMKH2) to menaquinol (MKH2) and the conversion of 2-polyprenyl-6-methoxy-1,4-benzoquinol (DDMQH2) to 2-polyprenyl-3-methyl-6-methoxy-1,4-benzoquinol (DMQH2). This is Ubiquinone/menaquinone biosynthesis C-methyltransferase UbiE from Bartonella henselae (strain ATCC 49882 / DSM 28221 / CCUG 30454 / Houston 1) (Rochalimaea henselae).